The sequence spans 82 residues: RNA-binding protein Hfq (82 aa).

The Sm domain maps to 11 to 71; it reads DTFLNHVRKT…ISTIMPGAPI (61 aa).

This sequence belongs to the Hfq family. Homohexamer.

Its function is as follows. RNA chaperone that binds small regulatory RNA (sRNAs) and mRNAs to facilitate mRNA translational regulation in response to envelope stress, environmental stress and changes in metabolite concentrations. Also binds with high specificity to tRNAs. The polypeptide is RNA-binding protein Hfq (Nitrobacter winogradskyi (strain ATCC 25391 / DSM 10237 / CIP 104748 / NCIMB 11846 / Nb-255)).